The sequence spans 476 residues: Aspartyl/glutamyl-tRNA(Asn/Gln) amidotransferase subunit B (476 aa).

Belongs to the GatB/GatE family. GatB subfamily. In terms of assembly, heterotrimer of A, B and C subunits.

The enzyme catalyses L-glutamyl-tRNA(Gln) + L-glutamine + ATP + H2O = L-glutaminyl-tRNA(Gln) + L-glutamate + ADP + phosphate + H(+). It catalyses the reaction L-aspartyl-tRNA(Asn) + L-glutamine + ATP + H2O = L-asparaginyl-tRNA(Asn) + L-glutamate + ADP + phosphate + 2 H(+). Functionally, allows the formation of correctly charged Asn-tRNA(Asn) or Gln-tRNA(Gln) through the transamidation of misacylated Asp-tRNA(Asn) or Glu-tRNA(Gln) in organisms which lack either or both of asparaginyl-tRNA or glutaminyl-tRNA synthetases. The reaction takes place in the presence of glutamine and ATP through an activated phospho-Asp-tRNA(Asn) or phospho-Glu-tRNA(Gln). This chain is Aspartyl/glutamyl-tRNA(Asn/Gln) amidotransferase subunit B, found in Variovorax paradoxus (strain S110).